The following is a 181-amino-acid chain: Terminase small subunit (181 aa).

Residues 1-29 (MEVNKKQLADIFGASIRTIQNWQEQGMPV) are winged helix-turn-helix (wHTH). 31 to 36 (RGGGKG) is a binding site for ATP. A coiled-coil region spans residues 52–109 (ERDAEIENEKLRREVEELRQASEADLQPGTIEYERHRLTRAQADAQELKNARDSAEVV). Residues 110-140 (ETAFCTFVLSRIAGEIASILDGLPLSVQRRF) are self-assembly. The segment at 141 to 180 (PELENRHVDFLKRDIIKAMNKAAALDELIPGLLSEYIEQS) is binding to terminase large subunit.

Belongs to the terminase small subunit family. Homodimer. Heterotrimer of two small and one large terminase subunits. The catalytically competent terminase is composed of a tetramer of heterotrimers. The tetramer forms a ring structure large enough to encircle duplex DNA. Host IHFA/IHFB induces bending of viral DNA to facilitate the assembly of the terminase tetramer of heterotrimers. Interacts (via C-terminus) with the terminase large subunit (via N-terminus).

The protein resides in the host cytoplasm. The enzyme catalyses ATP + H2O = ADP + phosphate + H(+). The small subunit is responsible for the binding to multiple recognition elements within the packaging initiation site cos. The terminase lies at a unique vertex of the procapsid and is composed of two subunits, a small terminase subunit involved in viral DNA recognition (binding to packaging sequence cos), and a large terminase subunit possessing endonucleolytic and ATPase activities (DNA maturation and packaging). The terminase binds, cooperatively with the host factor IHFA/IHFB, to the cos site at the junction of adjacent viral genomes in the concatemeric DNA. The endonuclease activity of the large subunit cleave the viral DNA generating 5'overhangs of 12 bp in length. The terminase remains bound to the left end of the genome to be packaged, forming a stable DNA-terminase complex. In a reaction facilitated by the viral assembly catalyst gpFI, the DNA-terminase complex binds to the portal of the procapsid and the terminase packages the viral DNA into the procapsid until the next cos site on the concatemer reaches the complex ('unit length' packaging). The downstream cos site is then cut generating the mature right end of the genome, the heterotrimer undocks from the DNA-filled head and remains bound to the left end of concatemer's next genome. This Escherichia phage lambda (Bacteriophage lambda) protein is Terminase small subunit (Nu1).